We begin with the raw amino-acid sequence, 255 residues long: MTDTATENTTESAADYGRPAFVSRSVLVTGGNRGIGLAIAQRLAAEAHKVAVTHRGSGAPDGLFGVECDVTDNDAVDRAFTEVEEHQGPVEVLVSNAGISKDAFLIRMTEERFTEVINANLTGAFRVTQRAARSMQKKRFGRIIYIGSVSGMWGIGNQANYAAAKAGLIGMARSISRELSKAGVTANVVAPGYIDTEMTRALDERIQAGALEFIPAKRVGTAAEVPGAVSFLASEDASYIAGAVIPVDGGMGMGH.

NADP(+)-binding positions include 33–35 (RGI), Arg55, 69–70 (DV), Gly98, Tyr161, Lys165, Ile194, and Arg205. Residue Tyr161 is the Proton acceptor of the active site.

Belongs to the short-chain dehydrogenases/reductases (SDR) family. As to quaternary structure, homotetramer.

The protein resides in the secreted. It localises to the cell wall. It carries out the reaction a (3R)-hydroxyacyl-[ACP] + NADP(+) = a 3-oxoacyl-[ACP] + NADPH + H(+). It participates in lipid metabolism; mycolic acid biosynthesis. In terms of biological role, part of the mycobacterial fatty acid elongation system FAS-II, which is involved in mycolic acid biosynthesis. Catalyzes the NADPH-dependent reduction of beta-ketoacyl derivatives, the second step of the FAS-II elongation cycle. The protein is 3-oxoacyl-[acyl-carrier-protein] reductase MabA of Mycobacterium avium.